The sequence spans 108 residues: Universal stress protein Slr1101 (108 aa).

Belongs to the universal stress protein A family.

The chain is Universal stress protein Slr1101 from Synechocystis sp. (strain ATCC 27184 / PCC 6803 / Kazusa).